The sequence spans 275 residues: Mitochondrial outer membrane protein porin (275 aa).

Blocked amino end (Met) is present on Met-1.

It belongs to the eukaryotic mitochondrial porin family. Highly divergent.

Its subcellular location is the mitochondrion outer membrane. Forms a channel of about 1,7 nM through the cell membrane that allows diffusion of small hydrophilic molecules. The channel adopts an open conformation at low or zero membrane potential and a closed conformation at potentials above 20 mv. The open state has a weak anion selectivity whereas the closed state is cation-selective. This chain is Mitochondrial outer membrane protein porin (porA), found in Dictyostelium discoideum (Social amoeba).